Here is a 746-residue protein sequence, read N- to C-terminus: Alpha-galactosidase 2 (746 aa).

Residues 1–26 (MLGAPSPRRLADVLAVTAGLVASVRA) form the signal peptide. Residues N43, N156, N180, N188, N360, N427, N446, and N495 are each glycosylated (N-linked (GlcNAc...) asparagine). D504 serves as the catalytic Nucleophile. Catalysis depends on D566, which acts as the Proton donor. N714 carries an N-linked (GlcNAc...) asparagine glycan.

The protein belongs to the glycosyl hydrolase 27 family.

The protein localises to the secreted. It carries out the reaction Hydrolysis of terminal, non-reducing alpha-D-galactose residues in alpha-D-galactosides, including galactose oligosaccharides, galactomannans and galactolipids.. Alpha-galactosidase involved in the degradation of simple oligosaccharides like melibiose, raffinose and stachyose, and of polymeric galacto(gluco)mannans. This is Alpha-galactosidase 2 (agl2) from Hypocrea jecorina (Trichoderma reesei).